Reading from the N-terminus, the 101-residue chain is uncharacterized protein (101 aa).

This is an uncharacterized protein from Saccharomyces cerevisiae (strain ATCC 204508 / S288c) (Baker's yeast).